Here is a 378-residue protein sequence, read N- to C-terminus: uncharacterized protein (378 aa).

The For GATase activity role is filled by Cys-16. Residues Cys-16–Glu-378 enclose the Glutamine amidotransferase type-2 domain.

This is an uncharacterized protein from Archaeoglobus fulgidus (strain ATCC 49558 / DSM 4304 / JCM 9628 / NBRC 100126 / VC-16).